Here is a 191-residue protein sequence, read N- to C-terminus: Fe/S biogenesis protein NfuA (191 aa).

The [4Fe-4S] cluster site is built by cysteine 149 and cysteine 152.

This sequence belongs to the NfuA family. Homodimer. [4Fe-4S] cluster is required as a cofactor.

Involved in iron-sulfur cluster biogenesis. Binds a 4Fe-4S cluster, can transfer this cluster to apoproteins, and thereby intervenes in the maturation of Fe/S proteins. Could also act as a scaffold/chaperone for damaged Fe/S proteins. The chain is Fe/S biogenesis protein NfuA from Sodalis glossinidius (strain morsitans).